The primary structure comprises 276 residues: Putative non-heme chloroperoxidase (276 aa).

The AB hydrolase-1 domain occupies 26–263 (PIVLIHGFPL…GGPHAINWTH (238 aa)). Catalysis depends on residues Ser99, Asp228, and His257.

It belongs to the AB hydrolase superfamily. Bacterial non-heme haloperoxidase / perhydrolase family.

The polypeptide is Putative non-heme chloroperoxidase (Synechocystis sp. (strain ATCC 27184 / PCC 6803 / Kazusa)).